A 262-amino-acid polypeptide reads, in one-letter code: DNA-directed RNA polymerase subunit Rpo3 (262 aa).

The protein belongs to the archaeal Rpo3/eukaryotic RPB3 RNA polymerase subunit family. Part of the RNA polymerase complex.

Its subcellular location is the cytoplasm. The catalysed reaction is RNA(n) + a ribonucleoside 5'-triphosphate = RNA(n+1) + diphosphate. In terms of biological role, DNA-dependent RNA polymerase (RNAP) catalyzes the transcription of DNA into RNA using the four ribonucleoside triphosphates as substrates. This is DNA-directed RNA polymerase subunit Rpo3 from Pyrobaculum islandicum (strain DSM 4184 / JCM 9189 / GEO3).